Here is a 270-residue protein sequence, read N- to C-terminus: 5'-AMP-activated protein kinase subunit beta-1 (270 aa).

A disordered region spans residues 1–43 (MGNTSSERAALERHGGHKTPRRDSSGGTKDGDRPKILMDSPED). Residue Gly2 is the site of N-myristoyl glycine attachment. Thr4 is modified (phosphothreonine). 2 positions are modified to phosphoserine: Ser5 and Ser6. Thr19 is modified (phosphothreonine). Residues 21-36 (RRDSSGGTKDGDRPKI) are compositionally biased toward basic and acidic residues. Ser24 and Ser25 each carry phosphoserine; by autocatalysis. 4 positions are modified to phosphoserine: Ser40, Ser96, Ser101, and Ser108. The interval 68–163 (EVNDKAPAQA…QVKKTDFEVF (96 aa)) is glycogen-binding domain. Thr148 is modified (phosphothreonine). Ser182 bears the Phosphoserine mark.

It belongs to the 5'-AMP-activated protein kinase beta subunit family. As to quaternary structure, AMPK is a heterotrimer of an alpha catalytic subunit (PRKAA1 or PRKAA2), a beta (PRKAB1 or PRKAB2) and a gamma non-catalytic subunits (PRKAG1, PRKAG2 or PRKAG3). Interacts with FNIP1 and FNIP2. Post-translationally, phosphorylated when associated with the catalytic subunit (PRKAA1 or PRKAA2). Phosphorylated by ULK1; leading to negatively regulate AMPK activity and suggesting the existence of a regulatory feedback loop between ULK1 and AMPK.

Its function is as follows. Non-catalytic subunit of AMP-activated protein kinase (AMPK), an energy sensor protein kinase that plays a key role in regulating cellular energy metabolism. In response to reduction of intracellular ATP levels, AMPK activates energy-producing pathways and inhibits energy-consuming processes: inhibits protein, carbohydrate and lipid biosynthesis, as well as cell growth and proliferation. AMPK acts via direct phosphorylation of metabolic enzymes, and by longer-term effects via phosphorylation of transcription regulators. Also acts as a regulator of cellular polarity by remodeling the actin cytoskeleton; probably by indirectly activating myosin. Beta non-catalytic subunit acts as a scaffold on which the AMPK complex assembles, via its C-terminus that bridges alpha (PRKAA1 or PRKAA2) and gamma subunits (PRKAG1, PRKAG2 or PRKAG3). The polypeptide is 5'-AMP-activated protein kinase subunit beta-1 (PRKAB1) (Homo sapiens (Human)).